The primary structure comprises 228 residues: Lipoprotein-releasing system ATP-binding protein LolD 2 (228 aa).

In terms of domain architecture, ABC transporter spans 9 to 228; that stretch reads RGLERVYKTE…KDGHLELQRV (220 aa). 42–49 serves as a coordination point for ATP; it reads GPSGSGKS.

The protein belongs to the ABC transporter superfamily. Lipoprotein translocase (TC 3.A.1.125) family. As to quaternary structure, the complex is composed of two ATP-binding proteins (LolD) and two transmembrane proteins (LolC and LolE).

Its subcellular location is the cell inner membrane. Its function is as follows. Part of the ABC transporter complex LolCDE involved in the translocation of mature outer membrane-directed lipoproteins, from the inner membrane to the periplasmic chaperone, LolA. Responsible for the formation of the LolA-lipoprotein complex in an ATP-dependent manner. This chain is Lipoprotein-releasing system ATP-binding protein LolD 2, found in Caulobacter vibrioides (strain ATCC 19089 / CIP 103742 / CB 15) (Caulobacter crescentus).